The following is a 572-amino-acid chain: Proline--tRNA ligase (572 aa).

Belongs to the class-II aminoacyl-tRNA synthetase family. ProS type 1 subfamily. In terms of assembly, homodimer.

It localises to the cytoplasm. The enzyme catalyses tRNA(Pro) + L-proline + ATP = L-prolyl-tRNA(Pro) + AMP + diphosphate. In terms of biological role, catalyzes the attachment of proline to tRNA(Pro) in a two-step reaction: proline is first activated by ATP to form Pro-AMP and then transferred to the acceptor end of tRNA(Pro). As ProRS can inadvertently accommodate and process non-cognate amino acids such as alanine and cysteine, to avoid such errors it has two additional distinct editing activities against alanine. One activity is designated as 'pretransfer' editing and involves the tRNA(Pro)-independent hydrolysis of activated Ala-AMP. The other activity is designated 'posttransfer' editing and involves deacylation of mischarged Ala-tRNA(Pro). The misacylated Cys-tRNA(Pro) is not edited by ProRS. This Enterobacter sp. (strain 638) protein is Proline--tRNA ligase.